The following is a 164-amino-acid chain: MD-2-related lipid-recognition protein 3 (164 aa).

The signal sequence occupies residues 1–24 (MAMSHVQPMLLLLVSLFFLPALRG).

Interacts with RUB1/NEDD8. Post-translationally, neddylated. In terms of processing, ubiquitinated.

It localises to the vacuole. The protein resides in the endoplasmic reticulum. May be involved in herbivory-mediated responses. May play a role in herbivory-associated molecular pattern (HAMP) recognition. May function is jasmonate (JA) signaling in response to HAMP. May play a role in defense response against the pathogens Altenaria brassicicola and Pseudomonas syringae. The polypeptide is MD-2-related lipid-recognition protein 3 (Arabidopsis thaliana (Mouse-ear cress)).